The primary structure comprises 221 residues: UPF0502 protein CPS_0106 (221 aa).

Belongs to the UPF0502 family.

This Colwellia psychrerythraea (strain 34H / ATCC BAA-681) (Vibrio psychroerythus) protein is UPF0502 protein CPS_0106.